The following is a 158-amino-acid chain: MRSIAGLHKLKMEIFNVEELINMKPFKNMNKITINQKDNCILAYRCFVKIDTPRYIPSTSISSSNIIRIRNHDFTLSELLYSPFHFQQPQFQYLLPGFVLTCIDKVSKQQKECKYCISNRGDDDSLSINLFIPTINKSIYIIIGLRMKNFWKPKFEIE.

The protein belongs to the orthopoxvirus OPG058 family.

In Homo sapiens (Human), this protein is Protein OPG060 (OPG060).